We begin with the raw amino-acid sequence, 170 residues long: CASP-like protein 1F1 (170 aa).

Residues 1–16 (MMGDNEGRRTPLLNLG) are Cytoplasmic-facing. A helical membrane pass occupies residues 17–37 (VQVSMRVLTIGAAMASMWVMI). Residues 38-62 (TNREVASVYGIAFEAKYSYSSAFRY) are Extracellular-facing. Residues 63–83 (LVYAQIAVCAATLFTLVWACL) traverse the membrane as a helical segment. Residues 84–88 (AVRRR) are Cytoplasmic-facing. Residues 89-109 (GLVFALFFFDLLTTLTAISAF) form a helical membrane-spanning segment. Residues 110–141 (SAAFAEGYVGKYGNKQAGWLPICGYVHGYCSR) lie on the Extracellular side of the membrane. Residues 142–162 (VTISLAMSFASFILLFILTVL) traverse the membrane as a helical segment. Topologically, residues 163–170 (TASAARHY) are cytoplasmic.

Belongs to the Casparian strip membrane proteins (CASP) family. In terms of assembly, homodimer and heterodimers. As to expression, in flowers, expressed in the anther wall.

It is found in the cell membrane. The protein is CASP-like protein 1F1 of Arabidopsis thaliana (Mouse-ear cress).